The following is a 213-amino-acid chain: Chloramphenicol acetyltransferase 2 (213 aa).

H189 serves as the catalytic Proton acceptor.

It belongs to the chloramphenicol acetyltransferase family. In terms of assembly, homotrimer.

It catalyses the reaction chloramphenicol + acetyl-CoA = chloramphenicol 3-acetate + CoA. Its function is as follows. This enzyme is an effector of chloramphenicol resistance in bacteria. The protein is Chloramphenicol acetyltransferase 2 (cmlA) of Escherichia coli.